The sequence spans 132 residues: Large ribosomal subunit protein uL14 (132 aa).

Belongs to the universal ribosomal protein uL14 family. Part of the 50S ribosomal subunit. Forms a cluster with proteins L3 and L24e, part of which may contact the 16S rRNA in 2 intersubunit bridges.

Functionally, binds to 23S rRNA. Forms part of two intersubunit bridges in the 70S ribosome. This chain is Large ribosomal subunit protein uL14, found in Thermoplasma acidophilum (strain ATCC 25905 / DSM 1728 / JCM 9062 / NBRC 15155 / AMRC-C165).